Consider the following 232-residue polypeptide: CD302 antigen (232 aa).

The first 22 residues, 1 to 22 (MPRAAPPALLLPLLGLAAAAAA), serve as a signal peptide directing secretion. At 23 to 168 (DCPSSTWVQF…YEKKYLSDNR (146 aa)) the chain is on the extracellular side. The C-type lectin domain occupies 32 to 152 (FQDSCYIFLQ…CEVSSVEGTL (121 aa)). Asn109 is a glycosylation site (N-linked (GlcNAc...) asparagine). Cys128 and Cys143 are oxidised to a cystine. Residues 169–189 (ILISALVIASTVILTVLGAVV) form a helical membrane-spanning segment. Topologically, residues 190–232 (WFLYKRSLDSGFTTVFSAAHQSPYNDDCVLVVAEENEYDIQFN) are cytoplasmic.

The protein localises to the membrane. It is found in the cell projection. The protein resides in the filopodium. It localises to the cytoplasm. Its subcellular location is the cell cortex. The protein localises to the microvillus. Functionally, potential multifunctional C-type lectin receptor that may play roles in endocytosis and phagocytosis as well as in cell adhesion and migration. The polypeptide is CD302 antigen (Bos taurus (Bovine)).